Reading from the N-terminus, the 1228-residue chain is Clustered mitochondria protein homolog (1228 aa).

Positions 298-557 constitute a Clu domain; that stretch reads PSSLPSNSID…DNNPLDVGFA (260 aa). Residues 486–519 form a TPR 1 repeat; it reads CYGFDEASNKVIADAEFGSSLDDFAKVFHLKKHE. A coiled-coil region spans residues 671–702; that stretch reads LGRVIELAEQELEAQRALREAHLQQVEADNKE. TPR repeat units follow at residues 982 to 1015 and 1108 to 1141; these read AESYLALSTIHSKLEKKSEAVALCRKACAIYERV and AVNESRLANLYASVGEYKRSLACIESCYELFSKE.

The protein belongs to the CLU family. In terms of assembly, may associate with the eukaryotic translation initiation factor 3 (eIF-3) complex.

The protein resides in the cytoplasm. Its function is as follows. mRNA-binding protein involved in proper cytoplasmic distribution of mitochondria. The protein is Clustered mitochondria protein homolog of Eremothecium gossypii (strain ATCC 10895 / CBS 109.51 / FGSC 9923 / NRRL Y-1056) (Yeast).